Consider the following 72-residue polypeptide: Translation initiation factor IF-1 (72 aa).

Residues 1-72 (MAKEDSIEMQ…SKGRIVFRSR (72 aa)) enclose the S1-like domain.

Belongs to the IF-1 family. Component of the 30S ribosomal translation pre-initiation complex which assembles on the 30S ribosome in the order IF-2 and IF-3, IF-1 and N-formylmethionyl-tRNA(fMet); mRNA recruitment can occur at any time during PIC assembly.

It localises to the cytoplasm. Its function is as follows. One of the essential components for the initiation of protein synthesis. Stabilizes the binding of IF-2 and IF-3 on the 30S subunit to which N-formylmethionyl-tRNA(fMet) subsequently binds. Helps modulate mRNA selection, yielding the 30S pre-initiation complex (PIC). Upon addition of the 50S ribosomal subunit IF-1, IF-2 and IF-3 are released leaving the mature 70S translation initiation complex. This is Translation initiation factor IF-1 from Aeromonas hydrophila subsp. hydrophila (strain ATCC 7966 / DSM 30187 / BCRC 13018 / CCUG 14551 / JCM 1027 / KCTC 2358 / NCIMB 9240 / NCTC 8049).